We begin with the raw amino-acid sequence, 182 residues long: Small ribosomal subunit protein uS5 (182 aa).

Residues 16-79 enclose the S5 DRBM domain; that stretch reads FVDRLVHINR…EAAKRGMIYV (64 aa).

The protein belongs to the universal ribosomal protein uS5 family. In terms of assembly, part of the 30S ribosomal subunit. Contacts proteins S4 and S8.

With S4 and S12 plays an important role in translational accuracy. In terms of biological role, located at the back of the 30S subunit body where it stabilizes the conformation of the head with respect to the body. The protein is Small ribosomal subunit protein uS5 of Bartonella quintana (strain Toulouse) (Rochalimaea quintana).